The sequence spans 89 residues: MSEKTVERGRRKVRIGYVVSDKMNKTIVVELEDRVKHPLYGKIIRTTSKVKAHDENEIAGVGDRVQLMETRPLSATKRWRLVEVLEKAK.

This sequence belongs to the universal ribosomal protein uS17 family. As to quaternary structure, part of the 30S ribosomal subunit.

In terms of biological role, one of the primary rRNA binding proteins, it binds specifically to the 5'-end of 16S ribosomal RNA. The polypeptide is Small ribosomal subunit protein uS17 (Nocardia farcinica (strain IFM 10152)).